Here is a 545-residue protein sequence, read N- to C-terminus: MASTRARPMLPLLLVLVAVVIPGPVGAQVSIHPTEAFLPRGGSVQVNCSSSCEDENLGLGLETNWMKDELSSGHNWKLFKLSDIGEDSRPLCFENCGTTQSSASATITVYSFPERVELDPLPAWQQVGKNLILRCLVEGGAPRTQLSVVLLRGNETLSRQAVDGDPKEITFTVLASRGDHGANFSCFTELDLRPQGLSLFKNVSEVRQLRTFDLPTRVLKLDTPDLLEVGTQQKFLCSLEGLFPASEAQIYLEMGGQMLTLESTNSRDFVSATASVEVTEKLDRTLQLRCVLELADQTLEMEKTLRIYNFSAPILTLSQPEVSEGDQVTVKCEAHGGAQVVLLNSTSPRPPTSQGTSPRPPTSQIQFTLNASPEDHKRRFFCSAALEVDGKSLFKNQTLELHVLYGPHLDKKDCLGNWTWQEGSQQTLTCQPQGNPAPNLTCSRKADGVPLPIGMVKSVKREMNGTYKCRAFSSRGSITRDVHLTVLYHDQNTWVIIVGVLVLIIAGFVIVASIYTYYRQRKIRIYKLQKAQEEALKLKVQAPPP.

A signal peptide spans 1–27 (MASTRARPMLPLLLVLVAVVIPGPVGA). Topologically, residues 28–492 (QVSIHPTEAF…HLTVLYHDQN (465 aa)) are extracellular. Ig-like C2-type domains follow at residues 41–103 (GGSV…QSSA) and 128–193 (GKNL…LDLR). A glycan (N-linked (GlcNAc...) asparagine) is linked at Asn47. 3 cysteine pairs are disulfide-bonded: Cys48-Cys92, Cys52-Cys96, and Cys135-Cys186. Asn154 carries an N-linked (GlcNAc...) asparagine glycan. The short motif at 177–179 (RGD) is the Cell attachment site element. Residues Asn183 and Asn202 are each glycosylated (N-linked (GlcNAc...) asparagine). In terms of domain architecture, Ig-like C2-type 3 spans 230 to 297 (GTQQKFLCSL…LRCVLELADQ (68 aa)). The cysteines at positions 237 and 290 are disulfide-linked. Asn309, Asn344, Asn396, Asn417, Asn439, and Asn464 each carry an N-linked (GlcNAc...) asparagine glycan. The Ig-like C2-type 4 domain maps to 325–389 (GDQVTVKCEA…FFCSAALEVD (65 aa)). A disulfide bridge connects residues Cys332 and Cys382. The interval 343 to 365 (LNSTSPRPPTSQGTSPRPPTSQI) is disordered. Disulfide bonds link Cys414-Cys430, Cys430-Cys469, and Cys442-Cys469. Residues 423–476 (GSQQTLTCQPQGNPAPNLTCSRKADGVPLPIGMVKSVKREMNGTYKCRAFSSRG) form the Ig-like C2-type 5 domain. The chain crosses the membrane as a helical span at residues 493–517 (TWVIIVGVLVLIIAGFVIVASIYTY). The Cytoplasmic portion of the chain corresponds to 518 to 545 (YRQRKIRIYKLQKAQEEALKLKVQAPPP).

It belongs to the immunoglobulin superfamily. ICAM family. As to quaternary structure, homodimer. Interacts with MUC1 and promotes cell aggregation in epithelial cells. Interacts with ARHGEF26/SGEF. Interacts (on T cell side) with CD81, CD247 and CD9 at immunological synapses between antigen-presenting cells and T cells. In terms of processing, monoubiquitinated, which is promoted by MARCH9 and leads to endocytosis.

The protein resides in the membrane. Functionally, ICAM proteins are ligands for the leukocyte adhesion protein LFA-1 (integrin alpha-L/beta-2). During leukocyte trans-endothelial migration, ICAM1 engagement promotes the assembly of endothelial apical cups through ARHGEF26/SGEF and RHOG activation. This chain is Intercellular adhesion molecule 1 (Icam1), found in Rattus norvegicus (Rat).